The following is a 455-amino-acid chain: Probable 1,4-beta-D-glucan cellobiohydrolase A (455 aa).

An N-terminal signal peptide occupies residues 1-17; that stretch reads MHQRALLFSAFWTAVQA. Asn-81 is a glycosylation site (N-linked (GlcNAc...) asparagine). The active-site Nucleophile is the Glu-227. The active-site Proton donor is Glu-232. Asn-285 carries an N-linked (GlcNAc...) asparagine glycan.

This sequence belongs to the glycosyl hydrolase 7 (cellulase C) family.

The protein resides in the secreted. The catalysed reaction is Hydrolysis of (1-&gt;4)-beta-D-glucosidic linkages in cellulose and cellotetraose, releasing cellobiose from the non-reducing ends of the chains.. Its function is as follows. The biological conversion of cellulose to glucose generally requires three types of hydrolytic enzymes: (1) Endoglucanases which cut internal beta-1,4-glucosidic bonds; (2) Exocellobiohydrolases that cut the disaccharide cellobiose from the non-reducing end of the cellulose polymer chain; (3) Beta-1,4-glucosidases which hydrolyze the cellobiose and other short cello-oligosaccharides to glucose. This chain is Probable 1,4-beta-D-glucan cellobiohydrolase A (cbhA), found in Aspergillus flavus (strain ATCC 200026 / FGSC A1120 / IAM 13836 / NRRL 3357 / JCM 12722 / SRRC 167).